The sequence spans 282 residues: Bifunctional protein FolD (282 aa).

NADP(+)-binding positions include 163 to 165 (NRS), Thr-188, and Ile-229.

Belongs to the tetrahydrofolate dehydrogenase/cyclohydrolase family. In terms of assembly, homodimer.

The enzyme catalyses (6R)-5,10-methylene-5,6,7,8-tetrahydrofolate + NADP(+) = (6R)-5,10-methenyltetrahydrofolate + NADPH. It catalyses the reaction (6R)-5,10-methenyltetrahydrofolate + H2O = (6R)-10-formyltetrahydrofolate + H(+). The protein operates within one-carbon metabolism; tetrahydrofolate interconversion. Catalyzes the oxidation of 5,10-methylenetetrahydrofolate to 5,10-methenyltetrahydrofolate and then the hydrolysis of 5,10-methenyltetrahydrofolate to 10-formyltetrahydrofolate. The chain is Bifunctional protein FolD from Malacoplasma penetrans (strain HF-2) (Mycoplasma penetrans).